The chain runs to 370 residues: Dihydroorotate dehydrogenase (quinone) (370 aa).

FMN-binding positions include 80-84 (AGFDK) and threonine 104. A substrate-binding site is contributed by lysine 84. 129–133 (NRMGF) serves as a coordination point for substrate. FMN-binding residues include asparagine 157 and asparagine 190. Asparagine 190 contacts substrate. Serine 193 acts as the Nucleophile in catalysis. Substrate is bound at residue asparagine 195. FMN contacts are provided by lysine 226 and threonine 254. A substrate-binding site is contributed by 255-256 (NT). Residues glycine 278, glycine 307, and 328–329 (YT) contribute to the FMN site.

It belongs to the dihydroorotate dehydrogenase family. Type 2 subfamily. In terms of assembly, monomer. It depends on FMN as a cofactor.

It localises to the cell membrane. It catalyses the reaction (S)-dihydroorotate + a quinone = orotate + a quinol. It participates in pyrimidine metabolism; UMP biosynthesis via de novo pathway; orotate from (S)-dihydroorotate (quinone route): step 1/1. Functionally, catalyzes the conversion of dihydroorotate to orotate with quinone as electron acceptor. The polypeptide is Dihydroorotate dehydrogenase (quinone) (Mycolicibacterium paratuberculosis (strain ATCC BAA-968 / K-10) (Mycobacterium paratuberculosis)).